A 217-amino-acid polypeptide reads, in one-letter code: Cytidylate kinase (217 aa).

21–29 (GPAASGKGT) serves as a coordination point for ATP.

This sequence belongs to the cytidylate kinase family. Type 1 subfamily.

The protein localises to the cytoplasm. The enzyme catalyses CMP + ATP = CDP + ADP. The catalysed reaction is dCMP + ATP = dCDP + ADP. In Rickettsia bellii (strain OSU 85-389), this protein is Cytidylate kinase.